The sequence spans 351 residues: Phenylacetaldoxime dehydratase (351 aa).

This sequence belongs to the heme-containing dehydratase family. As to quaternary structure, monomer. Requires heme b as cofactor.

It catalyses the reaction (Z)-phenylacetaldehyde oxime = phenylacetonitrile + H2O. Its function is as follows. Catalyzes the stoichiometric dehydration of Z-phenylacetaldoxime to phenylacetonitrile. Prefers the Z-form of phenylacetaldoxime over its E-isomer. The protein is Phenylacetaldoxime dehydratase of Bacillus sp. (strain OxB-1).